Here is a 661-residue protein sequence, read N- to C-terminus: UvrABC system protein B (661 aa).

Residues 31-186 (DNIEGGEKAQ…LLNALVDIQF (156 aa)) form the Helicase ATP-binding domain. ATP is bound at residue 44–51 (GATGTGKT). Positions 97-120 (YYDYYQPEAYVPSSDTYIEKDSSV) match the Beta-hairpin motif. Positions 435 to 601 (QMDDLLGEIN…TIKKEIRDLI (167 aa)) constitute a Helicase C-terminal domain. In terms of domain architecture, UVR spans 626 to 661 (KAMIKKLEGQMQEAAEVLDFELAAQIRDMVIELKNM).

The protein belongs to the UvrB family. Forms a heterotetramer with UvrA during the search for lesions. Interacts with UvrC in an incision complex.

The protein localises to the cytoplasm. Functionally, the UvrABC repair system catalyzes the recognition and processing of DNA lesions. A damage recognition complex composed of 2 UvrA and 2 UvrB subunits scans DNA for abnormalities. Upon binding of the UvrA(2)B(2) complex to a putative damaged site, the DNA wraps around one UvrB monomer. DNA wrap is dependent on ATP binding by UvrB and probably causes local melting of the DNA helix, facilitating insertion of UvrB beta-hairpin between the DNA strands. Then UvrB probes one DNA strand for the presence of a lesion. If a lesion is found the UvrA subunits dissociate and the UvrB-DNA preincision complex is formed. This complex is subsequently bound by UvrC and the second UvrB is released. If no lesion is found, the DNA wraps around the other UvrB subunit that will check the other stand for damage. In Streptococcus suis (strain 98HAH33), this protein is UvrABC system protein B.